We begin with the raw amino-acid sequence, 429 residues long: Ribosomal RNA small subunit methyltransferase B (429 aa).

S-adenosyl-L-methionine contacts are provided by residues 254-260, Asp277, Asp303, and Asp322; that span reads CAAPGGK. Cys375 acts as the Nucleophile in catalysis. Residues 397–419 are disordered; that stretch reads ALSETGTPDQPGQQNLPGGEEGD. Residues 400–412 show a composition bias toward polar residues; the sequence is ETGTPDQPGQQNL.

This sequence belongs to the class I-like SAM-binding methyltransferase superfamily. RsmB/NOP family.

The protein resides in the cytoplasm. It catalyses the reaction cytidine(967) in 16S rRNA + S-adenosyl-L-methionine = 5-methylcytidine(967) in 16S rRNA + S-adenosyl-L-homocysteine + H(+). Functionally, specifically methylates the cytosine at position 967 (m5C967) of 16S rRNA. The chain is Ribosomal RNA small subunit methyltransferase B from Salmonella heidelberg (strain SL476).